Here is a 232-residue protein sequence, read N- to C-terminus: Orotate phosphoribosyltransferase (232 aa).

5-phospho-alpha-D-ribose 1-diphosphate-binding positions include Arg-107, Lys-108, Lys-111, His-113, and 133–141 (EDLTTAGGS). Position 137 (Thr-137) interacts with orotate.

The protein belongs to the purine/pyrimidine phosphoribosyltransferase family. PyrE subfamily. As to quaternary structure, homodimer. Mg(2+) is required as a cofactor.

The enzyme catalyses orotidine 5'-phosphate + diphosphate = orotate + 5-phospho-alpha-D-ribose 1-diphosphate. Its pathway is pyrimidine metabolism; UMP biosynthesis via de novo pathway; UMP from orotate: step 1/2. In terms of biological role, catalyzes the transfer of a ribosyl phosphate group from 5-phosphoribose 1-diphosphate to orotate, leading to the formation of orotidine monophosphate (OMP). The polypeptide is Orotate phosphoribosyltransferase (Rhizobium rhizogenes (strain K84 / ATCC BAA-868) (Agrobacterium radiobacter)).